Consider the following 94-residue polypeptide: Large ribosomal subunit protein bL31 (94 aa).

Positions 65–94 (YGMADSENDSTDKKKTTNEKKVSDSPSKES) are disordered. A compositionally biased stretch (basic and acidic residues) spans 74-94 (STDKKKTTNEKKVSDSPSKES).

Belongs to the bacterial ribosomal protein bL31 family. Type A subfamily. In terms of assembly, part of the 50S ribosomal subunit.

Functionally, binds the 23S rRNA. The chain is Large ribosomal subunit protein bL31 from Prochlorococcus marinus (strain MIT 9211).